The chain runs to 393 residues: Probable galacturonosyltransferase-like 8 (393 aa).

Residues Met-1 to Arg-4 are Cytoplasmic-facing. Residues Phe-5 to Ile-25 traverse the membrane as a helical; Signal-anchor for type II membrane protein segment. At Pro-26 to Leu-393 the chain is on the lumenal side. A glycan (N-linked (GlcNAc...) asparagine) is linked at Asn-226.

Belongs to the glycosyltransferase 8 family.

The protein resides in the golgi apparatus membrane. The protein operates within glycan metabolism; pectin biosynthesis. Its function is as follows. May be involved in pectin and/or xylans biosynthesis in cell walls. The polypeptide is Probable galacturonosyltransferase-like 8 (GATL8) (Arabidopsis thaliana (Mouse-ear cress)).